Consider the following 412-residue polypeptide: Subtilisin-like protease 6 (412 aa).

The first 20 residues, 1-20 (MGFITKAIPIVLAALSTVNG), serve as a signal peptide directing secretion. Positions 21–127 (AKILEAGPHA…VRTSTNGTNL (107 aa)) are excised as a propeptide. An Inhibitor I9 domain is found at 36-120 (KYIVVMKREV…YIEPDFVVRT (85 aa)). Residues N123 and N126 are each glycosylated (N-linked (GlcNAc...) asparagine). The Peptidase S8 domain maps to 135–412 (SWGLARVSSK…SKLIYNGSGK (278 aa)). Catalysis depends on charge relay system residues D167 and H198. N-linked (GlcNAc...) asparagine glycosylation is found at N252 and N264. S358 functions as the Charge relay system in the catalytic mechanism. N-linked (GlcNAc...) asparagine glycosylation occurs at N408.

Belongs to the peptidase S8 family.

The protein resides in the secreted. In terms of biological role, secreted subtilisin-like serine protease with keratinolytic activity that contributes to pathogenicity. This Trichophyton tonsurans (Scalp ringworm fungus) protein is Subtilisin-like protease 6 (SUB6).